A 180-amino-acid chain; its full sequence is NAD(P)H-quinone oxidoreductase subunit I, chloroplastic (180 aa).

2 4Fe-4S ferredoxin-type domains span residues Gly-55–Arg-84 and Leu-95–Glu-124. Residues Cys-64, Cys-67, Cys-70, Cys-74, Cys-104, Cys-107, Cys-110, and Cys-114 each coordinate [4Fe-4S] cluster.

This sequence belongs to the complex I 23 kDa subunit family. In terms of assembly, NDH is composed of at least 16 different subunits, 5 of which are encoded in the nucleus. It depends on [4Fe-4S] cluster as a cofactor.

It is found in the plastid. The protein localises to the chloroplast thylakoid membrane. It carries out the reaction a plastoquinone + NADH + (n+1) H(+)(in) = a plastoquinol + NAD(+) + n H(+)(out). The catalysed reaction is a plastoquinone + NADPH + (n+1) H(+)(in) = a plastoquinol + NADP(+) + n H(+)(out). Functionally, NDH shuttles electrons from NAD(P)H:plastoquinone, via FMN and iron-sulfur (Fe-S) centers, to quinones in the photosynthetic chain and possibly in a chloroplast respiratory chain. The immediate electron acceptor for the enzyme in this species is believed to be plastoquinone. Couples the redox reaction to proton translocation, and thus conserves the redox energy in a proton gradient. This chain is NAD(P)H-quinone oxidoreductase subunit I, chloroplastic, found in Platanus occidentalis (Sycamore).